A 304-amino-acid chain; its full sequence is Oxidoreductase calM (304 aa).

Positions 26, 45, 68, and 98 each coordinate NADP(+). Ser-152 (proton donor) is an active-site residue. Residues Tyr-166, Lys-170, Val-200, and Thr-202 each coordinate NADP(+). Tyr-166 functions as the Proton acceptor in the catalytic mechanism. Catalysis depends on Lys-170, which acts as the Lowers pKa of active site Tyr.

This sequence belongs to the short-chain dehydrogenases/reductases (SDR) family.

Its pathway is secondary metabolite biosynthesis. Oxidoreductase; part of the gene cluster that mediates the biosynthesis of calbistrin A and related compounds. Calbistrin A is a secondary metabolite with an interesting structure that was recently found to have bioactivity against leukemia cells. It consists of two polyketides linked by an ester bond: a bicyclic decalin containing polyketide and a linear 12 carbon dioic acid structure. The polyketide synthase calA is probably responsible for forming the decalin moiety. Because calA lacks a designated enoylreductase (ER) domain, the required activity is provided by the trans-enoyl reductase calK. Following release from the PKS, calF then probably catalyzes the oxidation and the subsequent Diels Alder cycloisomerization that lead to the formation of the decalin moiety. The decalin polyketide backbone includes two C-methyl groups, at C7 and C11 in backbone, of which the C7 position is probably methylated by the methyltransferase domain of calA. A candidate for adding the methyl group at C11, if not done by CalA, is the cluster methyltransferase calH. Several additional tailoring enzymes within the cluster could be involved in the modification of the decalin polyketide product. Those include the 3 cytochrome P450 monooxygenases CalE, CalG and CalL, of which one might be responsible for the introduction of the extra hydroxyl group attached to the backbone of the decalin moiety, at position C9 in the backbone, that allows for attachment of the linear moiety. One tailoring enzyme activity that is expected to be involved in biosynthesis of calbistrin is an acyltransferase for connecting the two polyketide synthase products, and which could be performed by the cluster acyltransferase calJ. The enzyme responsible for the biosynthesis of the linear moiety, probably a second PKS, has not been identified yet. This chain is Oxidoreductase calM, found in Penicillium decumbens.